Reading from the N-terminus, the 147-residue chain is Receptor activity-modifying protein 3 (147 aa).

The first 22 residues, 1–22, serve as a signal peptide directing secretion; the sequence is MKTPAQRLHLLPLLLLLCGECA. The Extracellular segment spans residues 23-112; the sequence is QVCGCNETGM…CTVDRTHWED (90 aa). N-linked (GlcNAc...) asparagine glycosylation is found at asparagine 28, asparagine 57, asparagine 70, and asparagine 102. Cystine bridges form between cysteine 39–cysteine 71 and cysteine 56–cysteine 103. A helical transmembrane segment spans residues 113–137; that stretch reads PPDEVLIPLIAVPVVLTVAMAGLVV. At 138 to 147 the chain is on the cytoplasmic side; the sequence is WRSKHTDRLL.

It belongs to the RAMP family. Heterodimer of CALCRL and RAMP3; interaction induces allosteric modulation of CALCRL function and ligand specificity for adrenomedullin/ADM and intermedin/ADM2. Heterodimer of CALCR and RAMP3; interaction form the receptor complex AMYR3 for amylin/IAPP. Interacts with GPER1. Expressed predominantly in the testis, embryonic and adult brain and in kidney.

The protein localises to the cell membrane. Its subcellular location is the membrane. Functionally, accessory protein that interacts with and modulates the function of G-protein coupled receptors including calcitonin gene-related peptide type 1 receptor (CALCRL), calcitonin receptor (CALCR) and G-protein coupled estrogen receptor 1 (GPER1). Required for the transport of CALCRL and GPER1 receptors to the plasma membrane. Plays a role in cardioprotection by reducing cardiac hypertrophy and perivascular fibrosis in a GPER1-dependent manner. Together with CALCRL, form a receptor complex for adrenomedullin/ADM and intermedin/ADM2. Together with CALCR, act as a receptor complex for amylin/IAPP. This chain is Receptor activity-modifying protein 3, found in Mus musculus (Mouse).